Reading from the N-terminus, the 69-residue chain is Putative membrane protein insertion efficiency factor (69 aa).

It belongs to the UPF0161 family.

Its subcellular location is the cell membrane. Could be involved in insertion of integral membrane proteins into the membrane. This chain is Putative membrane protein insertion efficiency factor, found in Desulfitobacterium hafniense (strain Y51).